Here is a 31-residue protein sequence, read N- to C-terminus: Nemertide alpha-7 (31 aa).

Disulfide bonds link cysteine 2-cysteine 16, cysteine 9-cysteine 20, and cysteine 15-cysteine 26. At proline 29 the chain carries 4-hydroxyproline.

Belongs to the nemertide family. As to expression, confined to the epidermis and to the mucus layer.

The protein resides in the secreted. In terms of biological role, potent toxin, demonstrating strong inhibitory effects on insect sodium channels (Nav) and reduced activity on mammalian sodium channels. Potently inhibits inactivation of insect sodium channels of B.germanica (BgNav1) (EC(50)=9.5 nM). The toxin also delays the inactivation of most mammalian Nav (human Nav1.1/SCN1A; EC(50)=171.5 nM, rat Nav1.2/SCN2A; EC(50)=50.4 nM, rat Nav1.3/SCN3A; EC(50)=170.2 nM, rat Nav1.4/SCN4A; EC(50)=810.6 nM, human Nav1.5/SCN5A; EC(50)=155.6 nM, mouse Nav1.6/SCN8A; EC(50)=147.6 nM, human Nav1.9/SCN9A; EC(50)=129 nM). Inactivation is completely prevented by a concentration of 1 uM, resulting in sustained, non-inactivating currents. In addition, the toxin significantly enhances the recovery from inactivation, and the open state is not required for the toxin to interact with the channel. In vivo, injection into brine shrimp (Artemia salina) stops movement or causes death after 24 hours (EC(50)=6.1 uM). The protein is Nemertide alpha-7 of Lineus ruber (Red bootlace).